A 188-amino-acid chain; its full sequence is MAEIAGNLQRILQSLDRQFAGNKYLQEFERKTGFPKSYAIAGAGVAYLFIIFINVGGVGEILSNFLGFVLPCYYSLHAIKTTTTADDTELLTYWIVFAFFSVIEFWSKAILYWVPFYWFFKTIFLIFIALPQLGGASLIYHRVIAPLTDPYIAAGSQRKASGISSKMEQAAKGASARATGAASHQSSD.

Residues 1-35 (MAEIAGNLQRILQSLDRQFAGNKYLQEFERKTGFP) lie on the Cytoplasmic side of the membrane. Residues 36–55 (KSYAIAGAGVAYLFIIFINV) traverse the membrane as a helical segment. Over 56-57 (GG) the chain is Lumenal. Residues 58-78 (VGEILSNFLGFVLPCYYSLHA) form a helical membrane-spanning segment. At 79–88 (IKTTTTADDT) the chain is on the cytoplasmic side. Residues 89 to 105 (ELLTYWIVFAFFSVIEF) form a helical membrane-spanning segment. At 106–108 (WSK) the chain is on the lumenal side. A helical membrane pass occupies residues 109–127 (AILYWVPFYWFFKTIFLIF). Topologically, residues 128–188 (IALPQLGGAS…TGAASHQSSD (61 aa)) are cytoplasmic. The disordered stretch occupies residues 163-188 (ISSKMEQAAKGASARATGAASHQSSD). Residues 170–188 (AAKGASARATGAASHQSSD) show a composition bias toward low complexity.

Belongs to the DP1 family. Oligomer.

The protein localises to the endoplasmic reticulum membrane. Its subcellular location is the golgi apparatus membrane. In terms of biological role, required to generate and maintain the structure of the tubular endoplasmic reticulum network and the vacuole. Induces high curvature in membranes and causes membrane tubule formation. Involved in membrane/vesicle trafficking. This is Protein YOP1 (YOP1) from Eremothecium gossypii (strain ATCC 10895 / CBS 109.51 / FGSC 9923 / NRRL Y-1056) (Yeast).